Here is a 1212-residue protein sequence, read N- to C-terminus: MALMFTGHLLFLALLMFAFSTFEESVSNYSEWAVFTDDIDQFKTQKVQDFRPNQKLKKSMLHPSLYFDAGEIQAMRQKSRASHLHLFRAIRSAVTVMLSNPTYYLPPPKHADFAAKWNEIYGNNLPPLALYCLLCPEDKVAFEFVLEYMDRMVGYKDWLVENAPGDEVPIGHSLTGFATAFDFLYNLLDNHRRQKYLEKIWVITEEMYEYSKVRSWGKQLLHNHQATNMIALLTGALVTGVDKGSKANIWKQAVVDVMEKTMFLLNHIVDGSLDEGVAYGSYTAKSVTQYVFLAQRHFNINNLDNNWLKMHFWFYYATLLPGFQRTVGIADSNYNWFYGPESQLVFLDKFILKNGAGNWLAQQIRKHRPKDGPMVPSTAQRWSTLHTEYIWYDPQLTPQPPADYGTAKIHTFPNWGVVTYGAGLPNTQTNTFVSFKSGKLGGRAVYDIVHFQPYSWIDGWRSFNPGHEHPDQNSFTFAPNGQVFVSEALYGPKLSHLNNVLVFAPSPSSQCNKPWEGQLGECAQWLKWTGEEVGDAAGEIITASQHGEMVFVSGEAVSAYSSAMRLKSVYRALLLLNSQTLLVVDHIERQEDSPINSVSAFFHNLDIDFKYIPYKFMNRYNGAMMDVWDAHYKMFWFDHHGNSPMASIQEAEQAAEFKKRWTQFVNVTFQMEPTITRIAYVFYGPYINVSSCRFIDSSNPGLQISLNVNNTEHVVSIVTDYHNLKTRFNYLGFGGFASVADQGQITRFGLGTQAIVKPVRHDRIIFPFGFKFNIAVGLILCISLVILTFQWRFYLSFRKLMRWILILVIALWFIELLDVWSTCSQPICAKWTRTEAEGSKKSLSSEGHHMDLPDVVITSLPGSGAEILKQLFFNSSDFLYIRVPTAYIDIPETELEIDSFVDACEWKVSDIRSGHFRLLRGWLQSLVQDTKLHLQNIHLHEPNRGKLAQYFAMNKDKKRKFKRRESLPEQRSQMKGAFDRDAEYIRALRRHLVYYPSARPVLSLSSGSWTLKLHFFQEVLGASMRALYIVRDPRAWIYSMLYNSKPSLYSLKNVPEHLAKLFKIEGGKGKCNLNSGYAFEYEPLRKELSKSKSNAVSLLSHLWLANTAAALRINTDLLPTSYQLVKFEDIVHFPQKTTERIFAFLGIPLSPASLNQILFATSTNLFYLPYEGEISPTNTNVWKQNLPRDEIKLIENICWTLMDRLGYPKFMD.

Positions 1–20 (MALMFTGHLLFLALLMFAFS) are cleaved as a signal peptide. N28, N666, N688, and N709 each carry an N-linked (GlcNAc...) asparagine glycan. The next 2 helical transmembrane spans lie at 764 to 784 (IIFPFGFKFNIAVGLILCISL) and 803 to 823 (WILILVIALWFIELLDVWSTC). N-linked (GlcNAc...) asparagine glycosylation is present at N874.

Belongs to the dermatan-sulfate isomerase family. As to expression, expressed in different brain areas as well as in multiple other peripheral tissues.

It localises to the membrane. The protein is Dermatan-sulfate epimerase-like protein (DSEL) of Homo sapiens (Human).